Consider the following 189-residue polypeptide: MTDHTPLQPKHEITDQADQDTSAEMLVEEEDKKEIGPNYITEEEAQEIRLRALAEMENFKKRLQKDHDEQIRYAIDNLLTDMLPVLDSLDLAIQYGSNDDACKDILMGVSMTRKLFLDTLKQYGVTVLGEINEPFNPELHEAIAHEEREDIPEGHVSTLHQRGYQLYERLLRPAKVSVSSNKNNSNTNK.

The span at 1-14 shows a compositional bias: basic and acidic residues; sequence MTDHTPLQPKHEIT. The segment at 1 to 23 is disordered; sequence MTDHTPLQPKHEITDQADQDTSA.

It belongs to the GrpE family. As to quaternary structure, homodimer.

The protein resides in the cytoplasm. In terms of biological role, participates actively in the response to hyperosmotic and heat shock by preventing the aggregation of stress-denatured proteins, in association with DnaK and GrpE. It is the nucleotide exchange factor for DnaK and may function as a thermosensor. Unfolded proteins bind initially to DnaJ; upon interaction with the DnaJ-bound protein, DnaK hydrolyzes its bound ATP, resulting in the formation of a stable complex. GrpE releases ADP from DnaK; ATP binding to DnaK triggers the release of the substrate protein, thus completing the reaction cycle. Several rounds of ATP-dependent interactions between DnaJ, DnaK and GrpE are required for fully efficient folding. The protein is Protein GrpE of Lawsonia intracellularis (strain PHE/MN1-00).